The following is a 356-amino-acid chain: D-alanine--D-alanine ligase (356 aa).

Residues 134–339 (KQLFAHRGLP…YADLITKLIE (206 aa)) enclose the ATP-grasp domain. An ATP-binding site is contributed by 167 to 222 (KDKLEFPVFVKPANLGSSVGISKCNNEEELKSGIEEAFQFDRKLVIEQGIEAREIE). Mg(2+)-binding residues include D293, E306, and N308.

The protein belongs to the D-alanine--D-alanine ligase family. The cofactor is Mg(2+). Mn(2+) serves as cofactor.

The protein resides in the cytoplasm. The catalysed reaction is 2 D-alanine + ATP = D-alanyl-D-alanine + ADP + phosphate + H(+). It participates in cell wall biogenesis; peptidoglycan biosynthesis. Cell wall formation. The sequence is that of D-alanine--D-alanine ligase from Staphylococcus carnosus (strain TM300).